Consider the following 285-residue polypeptide: 2-dehydro-3-deoxyphosphooctonate aldolase (285 aa).

The protein belongs to the KdsA family.

It localises to the cytoplasm. The enzyme catalyses D-arabinose 5-phosphate + phosphoenolpyruvate + H2O = 3-deoxy-alpha-D-manno-2-octulosonate-8-phosphate + phosphate. Its pathway is carbohydrate biosynthesis; 3-deoxy-D-manno-octulosonate biosynthesis; 3-deoxy-D-manno-octulosonate from D-ribulose 5-phosphate: step 2/3. The protein operates within bacterial outer membrane biogenesis; lipopolysaccharide biosynthesis. This chain is 2-dehydro-3-deoxyphosphooctonate aldolase, found in Delftia acidovorans (strain DSM 14801 / SPH-1).